The sequence spans 266 residues: Gas vesicle protein L (266 aa).

It belongs to the gas vesicle GvpF/GvpL family.

The protein localises to the gas vesicle. Might be involved in nucleating gas vesicle formation. A minor component of the gas vesicle. Gas vesicles are hollow, gas filled proteinaceous nanostructures found in some microorganisms. It is not clear what function gas vesicles perform in soil bacteria. The sequence is that of Gas vesicle protein L from Streptomyces sp. (strain CB03234).